Here is a 211-residue protein sequence, read N- to C-terminus: Redox-sensing transcriptional repressor Rex (211 aa).

The H-T-H motif DNA-binding region spans 17–56 (LYYRFVSSLKSKGIDRVNSKAISDALQIDSATIRRDFSYF). Residue 91-96 (GVGNLG) coordinates NAD(+).

It belongs to the transcriptional regulatory Rex family. Homodimer.

Its subcellular location is the cytoplasm. Modulates transcription in response to changes in cellular NADH/NAD(+) redox state. This is Redox-sensing transcriptional repressor Rex from Staphylococcus aureus (strain Mu3 / ATCC 700698).